We begin with the raw amino-acid sequence, 672 residues long: COBRA-like protein 10 (672 aa).

An N-terminal signal peptide occupies residues 1-35 (MRAIDVKTGMKIPWDVRYSLSLFIFLSSILFLSNG). N-linked (GlcNAc...) asparagine glycans are attached at residues N79, N135, N264, N328, N339, N368, N422, N442, N483, N562, N570, and N589. The region spanning 502-607 (KLPCPDNCGV…PVPGKQQSVI (106 aa)) is the CBM2 domain. The GPI-anchor amidated serine moiety is linked to residue S646. A propeptide spans 647-672 (SGHRRGISVSMSFVFATIAAFALMMD) (removed in mature form). The short motif at 664–672 (IAAFALMMD) is the Required for processing by the PIG complex, a critical step for apical plasma membrane localization in pollen tubes element.

The protein belongs to the COBRA family. Post-translationally, the GPI-anchor attachment at Ser-646 requires APTG1. As to expression, expressed in roots, stems, leaves, flowers and siliques. Specific expression in the pollen tube.

The protein localises to the cell membrane. It is found in the cytoplasm. The protein resides in the vesicle. Its function is as follows. Involved in the deposition of apical pectin cap and cellulose microfibrils in pollen tubes. Not essential for pollen development, hydration or germination, but required for pollen tubes growth in the female transmitting tract of pistil and toward micropyles, via the perception of ovule guidance cues. This Arabidopsis thaliana (Mouse-ear cress) protein is COBRA-like protein 10.